Consider the following 38-residue polypeptide: Alpha-conotoxin PeIA (38 aa).

A propeptide spanning residues 1–21 (FDGRNAAANDKASDLVALTVR) is cleaved from the precursor. Disulfide bonds link cysteine 23-cysteine 29 and cysteine 24-cysteine 37. The ser-Xaa-Pro motif, crucial for potent interaction with nAChR stretch occupies residues 25–27 (SHP). Cysteine 37 bears the Cysteine amide mark.

It belongs to the conotoxin A superfamily. Post-translationally, the hydroxylation at position Pro-27 is critical, since an hydroxylation at this position decreases potency of the toxin to inhibit both alpha-3-beta-2 (1300-fold) and alpha-6/alpha-3-beta-2-beta-3 (130-fold) nAChRs. A non-modified residue at position Pro-34 is critical, since a hydroxylation at this position decreases potency of the toxin to inhibit alpha-3-beta-2 (1-45-fold) and increases potency to inhibit alpha-6/alpha-3-beta-2-beta-3 (1.77-fold) nAChRs. As to expression, expressed by the venom duct.

It localises to the secreted. Its function is as follows. Alpha-conotoxins act on postsynaptic membranes, they bind to the nicotinic acetylcholine receptors (nAChR) and thus inhibit them. This synthetic peptide potently and reversibly blocks alpha-9-alpha-10/CHRNA9-CHRNA10 nAChR (IC(50)=6.9-54.9 nM), alpha-3-beta-2/CHRNA3-CHRNB2 (IC(50)=9.7-97.5 nM) and alpha-6/alpha-3-beta-2-beta-3 (CHRNA6/CHRNA3-CHRNB2-CHRNB3) (IC(50)=11.1-17.2 nM). It also inhibits alpha-6/alpha-3-beta-4 (CHRNA6/CHRNA3-CHRNB4) nAChR with a higher potency on human (IC(50)=6.75 nM) than on rat receptors (IC(50)=130-147 nM). Also shows a weak ability to inhibit alpha-3-beta-4/CHRNA3-CHRNB4 (IC(50)=480-1500 nM). This synthetic toxin also inhibits N-type calcium channels (Ca2.2/CACNA1B) (IC(50)=1.1 nM) via the activation of the G protein-coupled GABA(B) receptor in DRG neurons. Also exhibits inhibition of D.melanogaster alpha-7/CHRNA7 nAChRs. The protein is Alpha-conotoxin PeIA of Conus pergrandis (Grand cone).